The primary structure comprises 495 residues: Maternal protein exuperantia-1 (495 aa).

Disordered stretches follow at residues Asp-197–Asp-217 and Thr-377–Asn-495. Polar residues-rich tracts occupy residues Glu-207–Asn-216 and Ala-398–Glu-414.

In terms of biological role, ensures the proper localization of the mRNA of the bicoid gene to the anterior regions of the oocyte thus playing a fundamental role in the establishment of the polarity of the oocyte. May bind the bcd mRNA. This chain is Maternal protein exuperantia-1 (exu1), found in Drosophila pseudoobscura pseudoobscura (Fruit fly).